The primary structure comprises 484 residues: MKLIVKVFPEITIKSPPVRKRFIRQLAKNIRTVLRDLDPELAVTGVWDNLEVETAVEKPRLLREMIERLCCTPGIAHFLEVHEYPLGDLDDILEKCKRHYAGQLPGKIFAVRCKRAGRHPFTSMEVERYVGGCLRQQCGAAGVSLSAPEVEVRMEIRDQRLFVVHRQHDSIGGYPLGALEQTLVLMSGGFDSTVAAFQTMRRGLMTHFCFFNLGGRAHELGVMEVAHYLWQKYGSSQRVLFVSVPFEEVVGEILGKVDNSQMGVILKRMMLRAATRVAERLKIDALVTGEAISQVSSQTLPNLSVIDSATDMLVLRPLIASHKQDIIDTATRIGTAEFARHMPEYCGVISVNPTTRARRDRIDYEERQFDMAILERALERAHLVPIDRVIDELGEEICVEEVREALAGQIVLDIRHPEAVEDGPLELPGIEVRALPFYALNNRFKELDSNRQYLLYCDKGVMSRLHAHHLLSEGHANVRVYRPA.

The THUMP domain occupies 63-167 (REMIERLCCT…DQRLFVVHRQ (105 aa)). ATP is bound by residues 185–186 (LM), Lys267, Gly289, and Gln298. Cys346 and Cys457 are oxidised to a cystine. One can recognise a Rhodanese domain in the interval 405–483 (ALAGQIVLDI…GHANVRVYRP (79 aa)). Cys457 functions as the Cysteine persulfide intermediate in the catalytic mechanism.

The protein belongs to the ThiI family.

It localises to the cytoplasm. The enzyme catalyses [ThiI sulfur-carrier protein]-S-sulfanyl-L-cysteine + a uridine in tRNA + 2 reduced [2Fe-2S]-[ferredoxin] + ATP + H(+) = [ThiI sulfur-carrier protein]-L-cysteine + a 4-thiouridine in tRNA + 2 oxidized [2Fe-2S]-[ferredoxin] + AMP + diphosphate. It catalyses the reaction [ThiS sulfur-carrier protein]-C-terminal Gly-Gly-AMP + S-sulfanyl-L-cysteinyl-[cysteine desulfurase] + AH2 = [ThiS sulfur-carrier protein]-C-terminal-Gly-aminoethanethioate + L-cysteinyl-[cysteine desulfurase] + A + AMP + 2 H(+). The protein operates within cofactor biosynthesis; thiamine diphosphate biosynthesis. Its function is as follows. Catalyzes the ATP-dependent transfer of a sulfur to tRNA to produce 4-thiouridine in position 8 of tRNAs, which functions as a near-UV photosensor. Also catalyzes the transfer of sulfur to the sulfur carrier protein ThiS, forming ThiS-thiocarboxylate. This is a step in the synthesis of thiazole, in the thiamine biosynthesis pathway. The sulfur is donated as persulfide by IscS. The protein is tRNA sulfurtransferase of Azotobacter vinelandii (strain DJ / ATCC BAA-1303).